Reading from the N-terminus, the 284-residue chain is Pantothenate synthetase (284 aa).

Residue 30–37 coordinates ATP; sequence MGNLHDGH. Residue His37 is the Proton donor of the active site. Gln61 contacts (R)-pantoate. Gln61 provides a ligand contact to beta-alanine. 149 to 152 provides a ligand contact to ATP; sequence GEKD. Residue Gln155 participates in (R)-pantoate binding. Residues Ile178 and 186–189 each bind ATP; that span reads LSSR.

It belongs to the pantothenate synthetase family. Homodimer.

It is found in the cytoplasm. It catalyses the reaction (R)-pantoate + beta-alanine + ATP = (R)-pantothenate + AMP + diphosphate + H(+). It participates in cofactor biosynthesis; (R)-pantothenate biosynthesis; (R)-pantothenate from (R)-pantoate and beta-alanine: step 1/1. Its function is as follows. Catalyzes the condensation of pantoate with beta-alanine in an ATP-dependent reaction via a pantoyl-adenylate intermediate. This chain is Pantothenate synthetase, found in Salmonella typhi.